A 335-amino-acid chain; its full sequence is Methyltransferase pgmE (335 aa).

It belongs to the methyltransferase superfamily.

It functions in the pathway pigment biosynthesis. It participates in secondary metabolite biosynthesis. Its function is as follows. Methyltransferase; part of the gene cluster that mediates the biosynthesis of pleosporalin A, ascomycone A, as well as a third cryptic naphthoquinone derived pigment, all responsible for the coloration of conidia. Essential for the production of pleosporalin A, but not the 2 other final products. The pathway begins with the biosynthesis of the cyclized heptaketide 3-acetonyl-1,6,8-trihydroxy-2-naphthaldehyde by the NR-PKS pgmA. The C-6 hydroxyl group is further methylated by the O-methyltransferase pgmB to yield fusarubinaldehyde which is in turn oxidized by the cytochrome P450 monooxygenase pgmC at C-9. The C-1 hydroxyl group is then methylated spontaneously. Although pgmE, pgmD and pgmH are essential for the production of pleosporalin A, it is not the case for the 2 other final products and it remains difficult to assign a specific function to each enzyme. PgmF and pgmG seem not to be involved in pigment biosynthesis although they were regulated by the cluster-specific transcription factor pgmR. The sequence is that of Methyltransferase pgmE from Aspergillus terreus.